The following is a 250-amino-acid chain: 5'-nucleotidase SurE (250 aa).

The a divalent metal cation site is built by D8, D9, S39, and N95.

This sequence belongs to the SurE nucleotidase family. It depends on a divalent metal cation as a cofactor.

The protein localises to the cytoplasm. The enzyme catalyses a ribonucleoside 5'-phosphate + H2O = a ribonucleoside + phosphate. Nucleotidase that shows phosphatase activity on nucleoside 5'-monophosphates. The chain is 5'-nucleotidase SurE from Cupriavidus pinatubonensis (strain JMP 134 / LMG 1197) (Cupriavidus necator (strain JMP 134)).